We begin with the raw amino-acid sequence, 272 residues long: Formamidopyrimidine-DNA glycosylase (272 aa).

The active-site Schiff-base intermediate with DNA is Pro2. The Proton donor role is filled by Glu3. Lys57 serves as the catalytic Proton donor; for beta-elimination activity. The DNA site is built by His90, Arg109, and Lys150. An FPG-type zinc finger spans residues 235-269; the sequence is HVYGRAKKKCLLCSSIIQEEKIGQRNTFWCGHCQP. The active-site Proton donor; for delta-elimination activity is Arg259.

It belongs to the FPG family. In terms of assembly, monomer. Zn(2+) serves as cofactor.

It catalyses the reaction Hydrolysis of DNA containing ring-opened 7-methylguanine residues, releasing 2,6-diamino-4-hydroxy-5-(N-methyl)formamidopyrimidine.. It carries out the reaction 2'-deoxyribonucleotide-(2'-deoxyribose 5'-phosphate)-2'-deoxyribonucleotide-DNA = a 3'-end 2'-deoxyribonucleotide-(2,3-dehydro-2,3-deoxyribose 5'-phosphate)-DNA + a 5'-end 5'-phospho-2'-deoxyribonucleoside-DNA + H(+). Its function is as follows. Involved in base excision repair of DNA damaged by oxidation or by mutagenic agents. Acts as a DNA glycosylase that recognizes and removes damaged bases. Has a preference for oxidized purines, such as 7,8-dihydro-8-oxoguanine (8-oxoG). Has AP (apurinic/apyrimidinic) lyase activity and introduces nicks in the DNA strand. Cleaves the DNA backbone by beta-delta elimination to generate a single-strand break at the site of the removed base with both 3'- and 5'-phosphates. The polypeptide is Formamidopyrimidine-DNA glycosylase (Aliivibrio fischeri (strain ATCC 700601 / ES114) (Vibrio fischeri)).